Here is a 208-residue protein sequence, read N- to C-terminus: Large ribosomal subunit protein uL4 (208 aa).

The segment at 45–83 is disordered; that stretch reads RQGTHKSKTRAEVRGGGRKPYRQKGTGNARQGSTRSPLM. Over residues 69-80 the composition is skewed to polar residues; it reads GTGNARQGSTRS.

The protein belongs to the universal ribosomal protein uL4 family. In terms of assembly, part of the 50S ribosomal subunit.

One of the primary rRNA binding proteins, this protein initially binds near the 5'-end of the 23S rRNA. It is important during the early stages of 50S assembly. It makes multiple contacts with different domains of the 23S rRNA in the assembled 50S subunit and ribosome. Its function is as follows. Forms part of the polypeptide exit tunnel. This chain is Large ribosomal subunit protein uL4, found in Chlorobium luteolum (strain DSM 273 / BCRC 81028 / 2530) (Pelodictyon luteolum).